We begin with the raw amino-acid sequence, 210 residues long: Thymidylate kinase (210 aa).

11–18 (GVDGSGKS) is an ATP binding site.

The protein belongs to the thymidylate kinase family.

The enzyme catalyses dTMP + ATP = dTDP + ADP. In terms of biological role, phosphorylation of dTMP to form dTDP in both de novo and salvage pathways of dTTP synthesis. The sequence is that of Thymidylate kinase from Mycoplasmoides gallisepticum (strain R(low / passage 15 / clone 2)) (Mycoplasma gallisepticum).